We begin with the raw amino-acid sequence, 492 residues long: 6-phosphogluconate dehydrogenase, decarboxylating (492 aa).

NADP(+) is bound by residues 13–18 (GLAVMG), 36–38 (NRT), 78–80 (VKA), and Asn106. Residue Asn106 participates in substrate binding. Ser107 carries the post-translational modification Phosphoserine. Residue 132 to 134 (SGG) participates in substrate binding. Catalysis depends on Lys187, which acts as the Proton acceptor. 190–191 (HN) is a substrate binding site. The active-site Proton donor is Glu194. Position 195 (Tyr195) interacts with substrate. At Ser215 the chain carries Phosphoserine. Substrate is bound by residues Lys264, Arg291, Arg449, and His455.

It belongs to the 6-phosphogluconate dehydrogenase family. Homodimer.

It catalyses the reaction 6-phospho-D-gluconate + NADP(+) = D-ribulose 5-phosphate + CO2 + NADPH. It participates in carbohydrate degradation; pentose phosphate pathway; D-ribulose 5-phosphate from D-glucose 6-phosphate (oxidative stage): step 3/3. Catalyzes the oxidative decarboxylation of 6-phosphogluconate to ribulose 5-phosphate and CO(2), with concomitant reduction of NADP to NADPH. This chain is 6-phosphogluconate dehydrogenase, decarboxylating, found in Schizosaccharomyces pombe (strain 972 / ATCC 24843) (Fission yeast).